Here is a 250-residue protein sequence, read N- to C-terminus: MSDVSPSVLFEHPLNEKMRTWLRMEFLLQQLHGQRALSETAIALTFFRTVADLLDVLERGEVRTELLKELERQQQKLLAWADVPGVDMSLVDQLRNQLKQRGAALMSAPRLGQSLREDRLISLVRQRLSIPGGCCSFDLPTLHMWMHAPQQERDDDVANWQQTLEPLNQALTMVLDLIRQSGQFRNQISLNGFFQDNAEGADLLRLRINLAHQLYPQISGHKTRYAIRFLPLDSELGVVPERLTFELACC.

Belongs to the ZapD family. Interacts with FtsZ.

It localises to the cytoplasm. Cell division factor that enhances FtsZ-ring assembly. Directly interacts with FtsZ and promotes bundling of FtsZ protofilaments, with a reduction in FtsZ GTPase activity. The protein is Cell division protein ZapD of Serratia proteamaculans (strain 568).